We begin with the raw amino-acid sequence, 341 residues long: NADH-ubiquinone oxidoreductase chain 2 (341 aa).

Transmembrane regions (helical) follow at residues 8 to 28, 61 to 81, 95 to 117, 145 to 165, 195 to 215, 238 to 258, 266 to 286, and 320 to 340; these read IFFI…SWLG, FLTQ…MMMF, LLIL…FPGV, LNIN…ALGG, LLWL…ILMF, FFMF…GFLP, LVEM…LITL, and ILTM…IYLI.

This sequence belongs to the complex I subunit 2 family.

The protein localises to the mitochondrion inner membrane. It carries out the reaction a ubiquinone + NADH + 5 H(+)(in) = a ubiquinol + NAD(+) + 4 H(+)(out). Its function is as follows. Core subunit of the mitochondrial membrane respiratory chain NADH dehydrogenase (Complex I) that is believed to belong to the minimal assembly required for catalysis. Complex I functions in the transfer of electrons from NADH to the respiratory chain. The immediate electron acceptor for the enzyme is believed to be ubiquinone. This is NADH-ubiquinone oxidoreductase chain 2 from Aedes aegypti (Yellowfever mosquito).